The primary structure comprises 350 residues: Protein-glutamate methylesterase/protein-glutamine glutaminase (350 aa).

The Response regulatory domain maps to 5–122 (KVLCVDDSAL…RDGLIEYSEV (118 aa)). A 4-aspartylphosphate modification is found at aspartate 56. Residues 152-346 (PFASSEKLVI…ERILTRLGDR (195 aa)) enclose the CheB-type methylesterase domain. Catalysis depends on residues serine 165, histidine 191, and aspartate 288.

The protein belongs to the CheB family. Phosphorylated by CheA. Phosphorylation of the N-terminal regulatory domain activates the methylesterase activity.

The protein resides in the cytoplasm. The enzyme catalyses [protein]-L-glutamate 5-O-methyl ester + H2O = L-glutamyl-[protein] + methanol + H(+). The catalysed reaction is L-glutaminyl-[protein] + H2O = L-glutamyl-[protein] + NH4(+). Its function is as follows. Involved in chemotaxis. Part of a chemotaxis signal transduction system that modulates chemotaxis in response to various stimuli. Catalyzes the demethylation of specific methylglutamate residues introduced into the chemoreceptors (methyl-accepting chemotaxis proteins or MCP) by CheR. Also mediates the irreversible deamidation of specific glutamine residues to glutamic acid. The protein is Protein-glutamate methylesterase/protein-glutamine glutaminase of Bordetella pertussis (strain Tohama I / ATCC BAA-589 / NCTC 13251).